The chain runs to 522 residues: Man(5)GlcNAc(2)-PP-dolichol translocation protein RFT1 (522 aa).

A run of 10 helical transmembrane segments spans residues 35-55 (DVLGLVNVRLTLLYSSILFLT), 75-95 (LLWLSPIISTVISVVCVYLWY), 108-128 (VLLSFPISAIIESIAEPFSVI), 143-165 (FAIGQGMLICVKRIFVLAGLFMF), 177-197 (AQYIGAIAYLLFNFVAFYIYI), 322-342 (VVGVIGFVACTFGIPYSPVVI), 354-374 (GGALLLSLYSGYILVTAINGI), 400-420 (IIHLIINYVLCVYMNSAGFIV), 457-477 (TSIFLGVSLLATSFTYLLFAT), and 479-499 (PGLSYTLAHIAIGAVCLILTA).

Belongs to the RFT1 family.

The protein resides in the endoplasmic reticulum membrane. It functions in the pathway protein modification; protein glycosylation. Functionally, intramembrane glycolipid transporter that operates in the biosynthetic pathway of dolichol-linked oligosaccharides, the glycan precursors employed in protein asparagine (N)-glycosylation. The sequential addition of sugars to dolichol pyrophosphate produces dolichol-linked oligosaccharides containing fourteen sugars, including two GlcNAcs, nine mannoses and three glucoses. Once assembled, the oligosaccharide is transferred from the lipid to nascent proteins by oligosaccharyltransferases. The assembly of dolichol-linked oligosaccharides begins on the cytosolic side of the endoplasmic reticulum membrane and finishes in its lumen. RFT1 could mediate the translocation of the cytosolically oriented intermediate DolPP-GlcNAc2Man5, produced by ALG11, into the ER lumen where dolichol-linked oligosaccharides assembly continues. However, the intramembrane lipid transporter activity could not be confirmed in vitro. The sequence is that of Man(5)GlcNAc(2)-PP-dolichol translocation protein RFT1 from Caenorhabditis elegans.